We begin with the raw amino-acid sequence, 943 residues long: Isoleucine--tRNA ligase (943 aa).

A 'HIGH' region motif is present at residues 59–69 (PYANGQIHLGH). Glu577 serves as a coordination point for L-isoleucyl-5'-AMP. Residues 618–622 (KMSKS) carry the 'KMSKS' region motif. Lys621 contributes to the ATP binding site. Zn(2+) contacts are provided by Cys906, Cys909, Cys926, and Cys929.

Belongs to the class-I aminoacyl-tRNA synthetase family. IleS type 1 subfamily. As to quaternary structure, monomer. Requires Zn(2+) as cofactor.

Its subcellular location is the cytoplasm. The enzyme catalyses tRNA(Ile) + L-isoleucine + ATP = L-isoleucyl-tRNA(Ile) + AMP + diphosphate. Its function is as follows. Catalyzes the attachment of isoleucine to tRNA(Ile). As IleRS can inadvertently accommodate and process structurally similar amino acids such as valine, to avoid such errors it has two additional distinct tRNA(Ile)-dependent editing activities. One activity is designated as 'pretransfer' editing and involves the hydrolysis of activated Val-AMP. The other activity is designated 'posttransfer' editing and involves deacylation of mischarged Val-tRNA(Ile). This chain is Isoleucine--tRNA ligase, found in Xanthomonas campestris pv. campestris (strain 8004).